A 274-amino-acid chain; its full sequence is 2-dehydro-3-deoxyphosphooctonate aldolase (274 aa).

This sequence belongs to the KdsA family.

The protein localises to the cytoplasm. The catalysed reaction is D-arabinose 5-phosphate + phosphoenolpyruvate + H2O = 3-deoxy-alpha-D-manno-2-octulosonate-8-phosphate + phosphate. The protein operates within carbohydrate biosynthesis; 3-deoxy-D-manno-octulosonate biosynthesis; 3-deoxy-D-manno-octulosonate from D-ribulose 5-phosphate: step 2/3. It participates in bacterial outer membrane biogenesis; lipopolysaccharide biosynthesis. This Rickettsia peacockii (strain Rustic) protein is 2-dehydro-3-deoxyphosphooctonate aldolase.